The chain runs to 203 residues: Translation initiation factor IF-3 (203 aa).

Belongs to the IF-3 family. Monomer.

The protein localises to the cytoplasm. IF-3 binds to the 30S ribosomal subunit and shifts the equilibrium between 70S ribosomes and their 50S and 30S subunits in favor of the free subunits, thus enhancing the availability of 30S subunits on which protein synthesis initiation begins. This chain is Translation initiation factor IF-3, found in Corynebacterium efficiens (strain DSM 44549 / YS-314 / AJ 12310 / JCM 11189 / NBRC 100395).